A 311-amino-acid polypeptide reads, in one-letter code: Olfactory receptor 8B8 (311 aa).

Topologically, residues 1 to 25 (MAAENSSFVTQFILAGLTDQPGVQI) are extracellular. Residue Asn5 is glycosylated (N-linked (GlcNAc...) asparagine). A helical membrane pass occupies residues 26 to 46 (PLFFLFLGFYVVTVVGNLGLI). Residues 47–54 (TLIRLNSH) lie on the Cytoplasmic side of the membrane. The helical transmembrane segment at 55 to 75 (LHTPMYFFLYNLSFIDFCYSS) threads the bilayer. The Extracellular segment spans residues 76–99 (VITPKMLMSFVLKKNSISYAGCMT). The cysteines at positions 97 and 189 are disulfide-linked. The helical transmembrane segment at 100–120 (QLFFFLFFVVSESFILSAMAY) threads the bilayer. The Cytoplasmic segment spans residues 121 to 139 (DRYVAICNPLLYMVTMSPQ). The chain crosses the membrane as a helical span at residues 140–160 (VCFLLLLGVYGMGFAGAMAHT). Residues 161-197 (ACMMGVTFCANNLVNHYMCDILPLLECACTSTYVNEL) lie on the Extracellular side of the membrane. Residues 198 to 217 (VVFVVVGIDIGVPTVTIFIS) form a helical membrane-spanning segment. At 218–237 (YALILSSIFHIDSTEGRSKA) the chain is on the cytoplasmic side. The chain crosses the membrane as a helical span at residues 238–258 (FSTCSSHIIAVSLFFGSGAFM). At 259–271 (YLKPFSLLAMNQG) the chain is on the extracellular side. The helical transmembrane segment at 272–292 (KVSSLFYTTVVPMLNPLIYSL) threads the bilayer. At 293–311 (RNKDVKVALKKILNKNAFS) the chain is on the cytoplasmic side.

It belongs to the G-protein coupled receptor 1 family. Expressed in the tongue and testis.

It localises to the cell membrane. In terms of biological role, odorant receptor (Potential). May be involved in taste perception. This is Olfactory receptor 8B8 from Homo sapiens (Human).